A 405-amino-acid polypeptide reads, in one-letter code: Obg-like ATPase homolog (405 aa).

Residues 17–283 (PTSGIVGLAN…CKGIASEYFD (267 aa)) form the OBG-type G domain. ATP-binding positions include 26-31 (NVGKST) and V231. Residues 312-398 (NLISFFTCGP…QDNDIALFKA (87 aa)) enclose the TGS domain.

Belongs to the TRAFAC class OBG-HflX-like GTPase superfamily. OBG GTPase family.

It is found in the mitochondrion. In terms of biological role, hydrolyzes ATP, and can also hydrolyze GTP with lower efficiency. Has lower affinity for GTP. In Saccharomyces cerevisiae (strain ATCC 204508 / S288c) (Baker's yeast), this protein is Obg-like ATPase homolog (YLF2).